Here is a 424-residue protein sequence, read N- to C-terminus: Zygote arrest protein 1 (424 aa).

Disordered regions lie at residues Arg-125–Phe-175 and Gly-196–Leu-313. Residues Gly-141–Ser-150 are compositionally biased toward gly residues. The segment covering Arg-289–Glu-298 has biased composition (basic and acidic residues). A 3CxxC-type zinc finger spans residues Lys-326–Gly-409.

The protein belongs to the ZAR1 family. As to quaternary structure, interacts with YBX2. Ubiquitinated and degradaded by the proteasome during oocyte meiotic maturation, leading to MARDO (mitochondria-associated ribonucleoprotein domain) membraneless compartment dissolution. Ovary and testis.

It is found in the cytoplasm. The protein resides in the cytoplasmic ribonucleoprotein granule. In terms of biological role, mRNA-binding protein that mediates formation of MARDO (mitochondria-associated ribonucleoprotein domain), a membraneless compartment that stores maternal mRNAs in oocytes. MARDO assembly around mitochondria is directed by an increase in mitochondrial membrane potential during oocyte growth. Promotes formation of MARDO phase-separated membraneless compartment by undergoing liquid-liquid phase separation upon binding to maternal mRNAs. Binds to the 3'-UTR of maternal mRNAs. Maternal mRNAs stored in the MARDO are translationally repressed. Essential for female fertility and oocyte-to-embryo transition by coordinating maternal mRNA storage, translation and degradation. This chain is Zygote arrest protein 1, found in Homo sapiens (Human).